The primary structure comprises 513 residues: Dye-decolorizing peroxidase msp1 (513 aa).

Residues 1–20 (MKLFSASVFAAIIASHYASA) form the signal peptide. Residues 21 to 55 (TAHIRAPNVKPRRTNSLLTAPPQQPPLPSAQQAAS) constitute a propeptide that is removed on maturation. The disordered stretch occupies residues 33–52 (RTNSLLTAPPQQPPLPSAQQ). The active-site Proton acceptor is the Asp228. A heme-binding site is contributed by His365.

In terms of assembly, homodimer. Heme b is required as a cofactor.

The protein resides in the secreted. The catalysed reaction is Reactive Blue 5 + 2 H2O2 = 2,2'-disulfonyl azobenzene + 3-[(4-amino-6-chloro-1,3,5-triazin-2-yl)amino]benzenesulfonate + phthalate + 2 H2O + 2 H(+). The enzyme catalyses 2 a phenolic donor + H2O2 = 2 a phenolic radical donor + 2 H2O. In terms of biological role, manganese-independent peroxidase that is able to convert a large number of compounds, but its physiological substrate is not known. In addition to classic peroxidase substrates (e.g. 2,6-dimethoxyphenol), oxidizes dyes such as Reactive Blue 5. Also degrades beta-carotene. The polypeptide is Dye-decolorizing peroxidase msp1 (Mycetinis scorodonius (Garlic mushroom)).